The following is a 242-amino-acid chain: ATP synthase subunit a (242 aa).

A run of 5 helical transmembrane segments spans residues 28–48 (LHGQVFLSSWVVIGLLLLLVV), 89–109 (LPFVGTLFLFIFVCNWGGALI), 128–148 (INTTVAMALLVSLSYFYAGLS), 193–213 (LVVAVLAFLVPVLVPLPAMFL), and 214–234 (GLFTSAIQALIFATLAANYIG).

The protein belongs to the ATPase A chain family. As to quaternary structure, F-type ATPases have 2 components, CF(1) - the catalytic core - and CF(0) - the membrane proton channel. CF(1) has five subunits: alpha(3), beta(3), gamma(1), delta(1), epsilon(1). CF(0) has four main subunits: a, b, b' and c.

The protein resides in the cellular thylakoid membrane. Key component of the proton channel; it plays a direct role in the translocation of protons across the membrane. The sequence is that of ATP synthase subunit a from Synechococcus sp. (strain WH7803).